Reading from the N-terminus, the 161-residue chain is MQGKAIKYGDNIDTDVIIPARFLNTSDPKELAEHCMEDLDREFKNKVKEGDILVVGENFGCGSSREHAPLAIKASGISCIIAKSFARIFYRNAINIGLPILESREAVDGIEEGDIVSVDVDNGIIRNVTKGTEFKAQPFPEFIKEIIKYGGLINYVREKVR.

The protein belongs to the LeuD family. LeuD type 2 subfamily. Heterodimer of LeuC and LeuD.

It catalyses the reaction (2R,3S)-3-isopropylmalate = (2S)-2-isopropylmalate. It functions in the pathway amino-acid biosynthesis; L-leucine biosynthesis; L-leucine from 3-methyl-2-oxobutanoate: step 2/4. Functionally, catalyzes the isomerization between 2-isopropylmalate and 3-isopropylmalate, via the formation of 2-isopropylmaleate. The sequence is that of 3-isopropylmalate dehydratase small subunit (leuD) from Caldanaerobacter subterraneus subsp. tengcongensis (strain DSM 15242 / JCM 11007 / NBRC 100824 / MB4) (Thermoanaerobacter tengcongensis).